The chain runs to 132 residues: UPF0299 membrane protein CKO_00648 (132 aa).

A run of 4 helical transmembrane segments spans residues 7–27, 31–51, 63–83, and 93–113; these read IIWQ…AGIF, LLPI…VLLA, GCYV…VGVM, and FGPV…VVSW.

The protein belongs to the UPF0299 family.

It is found in the cell inner membrane. This Citrobacter koseri (strain ATCC BAA-895 / CDC 4225-83 / SGSC4696) protein is UPF0299 membrane protein CKO_00648.